A 519-amino-acid polypeptide reads, in one-letter code: MSLRPSTKTEIRRIRYKVSVDAEEGRRRREDFLVEIRKSKRNENLMKKRRVKVLPPDYKLISNDPFESLLEIANMITGVFSDDPSLQLEYTTRFRVVLSFDRSPPTDNVIKSGVVPRFVEFLKKDDNPKLQFEAAWALTNIASGASEHTKVVIDHGVVPLFVQLLASPDDDVREQAIWGLGNVAGDSIQCRDFVLNSGAFIPLLHQLNNHATLSILRNATWTLSNFFRGKPSPPFDLVKHVLPVLKRLVYSDDEQVLIDACWALSNLSDASNENIQSVIEAGVVPRLVELLQHASPVVLVPALRCIGNIVSGNSQQTHCVINCGVLPVLADLLTQNHMRGIRREACWTISNITAGLEEQIQSVIDANLIPSLVNLAQHAEFDIKKEAIWAISNASVGGSPNQIKYLVEQNCIKALCDILVCPDLRIILVSLGGLEMILIAGEVDKNLRDVNCYSQMIEDAEGLEKIENLQHHGNNEIYEKAVKILQTYGLVEEDGRLVEEEDEGGDGCSHPEFQFDFSR.

Positions 1–58 (MSLRPSTKTEIRRIRYKVSVDAEEGRRRREDFLVEIRKSKRNENLMKKRRVKVLPPDY) constitute an IBB domain. ARM repeat units follow at residues 103-143 (SPPT…NIAS), 146-185 (SEHT…NVAG), 188-228 (IQCR…NFFR), 230-269 (KPSP…NLSD), 272-311 (NENI…NIVS), 314-354 (SQQT…NITA), 357-396 (EEQI…NASV), and 400-439 (PNQI…MILI).

This sequence belongs to the importin alpha family. In terms of assembly, forms a complex with importin subunit beta-1.

The protein resides in the nucleus envelope. In terms of biological role, binds to conventional NLS motifs and mediates nuclear protein import across the nuclear envelope. The protein is Importin subunit alpha-5 of Arabidopsis thaliana (Mouse-ear cress).